The primary structure comprises 62 residues: MNVKELRNQDVSTLNETLIKLLKKHFELRMQHKSAQLDDASKLGKTKRSIAQVKTIIRQKQV.

The protein belongs to the universal ribosomal protein uL29 family.

The polypeptide is Large ribosomal subunit protein uL29 (Ruthia magnifica subsp. Calyptogena magnifica).